The chain runs to 314 residues: Porphobilinogen deaminase (314 aa).

The residue at position 249 (Cys-249) is an S-(dipyrrolylmethanemethyl)cysteine.

Belongs to the HMBS family. Monomer. The cofactor is dipyrromethane.

It carries out the reaction 4 porphobilinogen + H2O = hydroxymethylbilane + 4 NH4(+). It participates in porphyrin-containing compound metabolism; protoporphyrin-IX biosynthesis; coproporphyrinogen-III from 5-aminolevulinate: step 2/4. Its function is as follows. Tetrapolymerization of the monopyrrole PBG into the hydroxymethylbilane pre-uroporphyrinogen in several discrete steps. This is Porphobilinogen deaminase from Brucella suis biovar 1 (strain 1330).